Here is a 211-residue protein sequence, read N- to C-terminus: ATP phosphoribosyltransferase (211 aa).

Belongs to the ATP phosphoribosyltransferase family. Short subfamily. In terms of assembly, heteromultimer composed of HisG and HisZ subunits.

It localises to the cytoplasm. The catalysed reaction is 1-(5-phospho-beta-D-ribosyl)-ATP + diphosphate = 5-phospho-alpha-D-ribose 1-diphosphate + ATP. It functions in the pathway amino-acid biosynthesis; L-histidine biosynthesis; L-histidine from 5-phospho-alpha-D-ribose 1-diphosphate: step 1/9. Its function is as follows. Catalyzes the condensation of ATP and 5-phosphoribose 1-diphosphate to form N'-(5'-phosphoribosyl)-ATP (PR-ATP). Has a crucial role in the pathway because the rate of histidine biosynthesis seems to be controlled primarily by regulation of HisG enzymatic activity. This chain is ATP phosphoribosyltransferase, found in Hahella chejuensis (strain KCTC 2396).